A 538-amino-acid polypeptide reads, in one-letter code: Probable folate-biopterin transporter 9, chloroplastic (538 aa).

Residues 1-57 constitute a chloroplast transit peptide; the sequence is MNNPLLSISNPVKFFKPPIPYRISLNTTINKKQKHQSKTLVVKSNKRSTTSLTSSVS. 12 helical membrane passes run 85-105, 129-149, 152-172, 178-198, 220-240, 246-266, 309-329, 339-359, 370-390, 395-415, 447-467, and 479-499; these read VLLC…WLAL, LPMV…IGGA, VPYI…LAIF, VLPS…ITEV, ALMA…YCLL, ILFL…LSSK, LIWI…VFCY, SVIG…TVVY, ALIH…YILV, LAFG…AEIL, LCLS…MIGI, and ILIQ…VPML.

It belongs to the major facilitator superfamily. Folate-biopterin transporter (TC 2.A.71) family.

It is found in the plastid. It localises to the chloroplast membrane. Could mediate folate transport. This Arabidopsis thaliana (Mouse-ear cress) protein is Probable folate-biopterin transporter 9, chloroplastic.